The sequence spans 441 residues: Protein kinase C and casein kinase substrate in neurons protein 1 (441 aa).

Residues Ser2 and Ser76 each carry the phosphoserine modification. One can recognise an F-BAR domain in the interval 10 to 280 (EEITDSFWEV…AIRGADAQED (271 aa)). Positions 23–272 (KRTVKRIDDG…HVYRELEQAI (250 aa)) form a coiled coil. At Thr181 the chain carries Phosphothreonine. The segment at 297-380 (PQFEEWNPDL…ANGGANPFED (84 aa)) is disordered. Over residues 311–321 (AKKEKQPKKAE) the composition is skewed to basic and acidic residues. Over residues 324–355 (TLSNATGAVESTSQAGDRGSVSSYDRGQTYAT) the composition is skewed to polar residues. A phosphoserine mark is found at Ser343, Ser345, Ser346, Ser358, and Ser362. In terms of domain architecture, SH3 spans 382–441 (AKGVRVRALYDYDGQEQDELSFKAGDELTKLGEEDEQGWCRGRLDSGQLGLYPANYVEAI). At Tyr391 the chain carries Phosphotyrosine. Phosphoserine occurs at positions 402 and 427.

This sequence belongs to the PACSIN family. In terms of assembly, homodimer. May form heterooligomers with other PACSINs. Interacts with both COBL and DBNL. Identified in a complex composed of COBL, PACSIN1 and WASL. Interacts with EHD3. Interacts (via SH3 domain) with SYNJ1 and WASL. Interacts (via SH3 domain) with DNM1; the interaction is reduced by DNM1 phosphorylation. Interacts with DNM2 and DNM3. Interacts with MAPT. Interacts with EHD1. Interacts with TRPV4. In terms of processing, phosphorylated by casein kinase 2 (CK2) and protein kinase C (PKC). As to expression, highly expressed in brain. Detected in hippocampus and dorsal root ganglion neurons. Detected in rod photoreceptor terminals in the outer plexiform layer of the retina (at protein level). In CNS neurons, high levels in the pyramidal cells of the hippocampus, Purkinje cells of the cerebellum and large neurons of the cortex and brain stem.

The protein resides in the cytoplasm. Its subcellular location is the cell projection. The protein localises to the synapse. It localises to the synaptosome. It is found in the ruffle membrane. The protein resides in the membrane. Its subcellular location is the cytoplasmic vesicle membrane. The protein localises to the cytosol. It localises to the cell membrane. Functionally, binds to membranes via its F-BAR domain and mediates membrane tubulation. Plays a role in the reorganization of the microtubule cytoskeleton via its interaction with MAPT; this decreases microtubule stability and inhibits MAPT-induced microtubule polymerization. Plays a role in cellular transport processes by recruiting DNM1, DNM2 and DNM3 to membranes. Plays a role in the reorganization of the actin cytoskeleton and in neuron morphogenesis via its interaction with COBL and WASL, and by recruiting COBL to the cell cortex. Plays a role in the regulation of neurite formation, neurite branching and the regulation of neurite length. Required for normal synaptic vesicle endocytosis; this process retrieves previously released neurotransmitters to accommodate multiple cycles of neurotransmission. Required for normal excitatory and inhibitory synaptic transmission. The protein is Protein kinase C and casein kinase substrate in neurons protein 1 (Pacsin1) of Mus musculus (Mouse).